The sequence spans 122 residues: Flagellar protein FliT (122 aa).

Positions 1 to 50 are required for homodimerization; sequence MERQQQLLAAYQQIHSLSSQMIALAQTERWEDLVELELAYVTAVESTAAF. Residues 60–98 form a fliD binding region; that stretch reads LQELLRNKLQQILDNETELKRLLQQRMDQLKELIGQSTR.

Belongs to the FliT family. Homodimer. Interacts with FliD and FlhC.

It is found in the cytoplasm. It localises to the cytosol. In terms of biological role, dual-function protein that regulates the transcription of class 2 flagellar operons and that also acts as an export chaperone for the filament-capping protein FliD. As a transcriptional regulator, acts as an anti-FlhDC factor; it directly binds FlhC, thus inhibiting the binding of the FlhC/FlhD complex to class 2 promoters, resulting in decreased expression of class 2 flagellar operons. As a chaperone, effects FliD transition to the membrane by preventing its premature polymerization, and by directing it to the export apparatus. This Serratia proteamaculans (strain 568) protein is Flagellar protein FliT.